We begin with the raw amino-acid sequence, 354 residues long: Hydrophobic dipeptide epimerase (354 aa).

Residues threonine 134, lysine 159, and 159-161 (KIK) contribute to the substrate site. A Mg(2+)-binding site is contributed by aspartate 189. Position 191 (asparagine 191) interacts with substrate. 2 residues coordinate Mg(2+): glutamate 215 and aspartate 240. Substrate contacts are provided by residues lysine 264, 292–295 (CMAE), and 318–320 (DLD).

Belongs to the mandelate racemase/muconate lactonizing enzyme family. Mg(2+) is required as a cofactor.

Catalyzes the epimerization of L-Ile-L-Tyr to L-Ile-D-Tyr (in vitro). Catalyzes the epimerization of dipeptides, with a preference for substrates with a hydrophobic or basic amino acid in the first position, followed by an aromatic residue in the second position. Has epimerase activity with L-Ile-L-Tyr, L-Val-L-Tyr and L-Arg-L-Tyr (in vitro). The sequence is that of Hydrophobic dipeptide epimerase from Enterococcus faecalis (strain ATCC 700802 / V583).